The primary structure comprises 374 residues: Anhydro-N-acetylmuramic acid kinase (374 aa).

15-22 (GTSADGID) lines the ATP pocket.

The protein belongs to the anhydro-N-acetylmuramic acid kinase family.

It catalyses the reaction 1,6-anhydro-N-acetyl-beta-muramate + ATP + H2O = N-acetyl-D-muramate 6-phosphate + ADP + H(+). The protein operates within amino-sugar metabolism; 1,6-anhydro-N-acetylmuramate degradation. It functions in the pathway cell wall biogenesis; peptidoglycan recycling. Functionally, catalyzes the specific phosphorylation of 1,6-anhydro-N-acetylmuramic acid (anhMurNAc) with the simultaneous cleavage of the 1,6-anhydro ring, generating MurNAc-6-P. Is required for the utilization of anhMurNAc either imported from the medium or derived from its own cell wall murein, and thus plays a role in cell wall recycling. The polypeptide is Anhydro-N-acetylmuramic acid kinase (Xanthomonas axonopodis pv. citri (strain 306)).